The sequence spans 70 residues: uncharacterized protein (70 aa).

This is an uncharacterized protein from Sinorhizobium fredii (strain NBRC 101917 / NGR234).